The primary structure comprises 462 residues: uncharacterized protein (462 aa).

Positions 12-70 (MLKKNDIIQVAISDLSHEGAGVAKHDGFVFFVDNALPEEVIDMRVLKVNKNSGFGKVEA) constitute a TRAM domain. S-adenosyl-L-methionine-binding residues include Gln-294, Tyr-323, Glu-344, and Asp-392. The active-site Nucleophile is Cys-419.

The protein belongs to the class I-like SAM-binding methyltransferase superfamily. RNA M5U methyltransferase family.

This is an uncharacterized protein from Streptococcus pyogenes serotype M1.